A 332-amino-acid polypeptide reads, in one-letter code: F-box/SPRY domain-containing protein 1 (332 aa).

Residues 1-10 are compositionally biased toward acidic residues; that stretch reads MTENNEETIV. The interval 1 to 81 is disordered; the sequence is MTENNEETIV…RRSPRRPEVS (81 aa). The segment covering 15–24 has biased composition (polar residues); sequence CNLTSSTPMK. An F-box domain is found at 79-127; it reads EVSASRLPLKVLNQIFQYLSLKDLRSAMLTCHSWNNALSMEDSDIWQQL. Positions 138–330 constitute a B30.2/SPRY domain; sequence SDPFLFVELR…VTMVYVGSPQ (193 aa).

The protein belongs to the FBXO45/Fsn family. In terms of assembly, component of an SCF (SKP1-CUL1-F-box protein) E3 ubiquitin ligase complex composed of cul-1, fsn-1, rpm-1 and skr-1. Interacts (via SPRY domain) with scd-2 (via cytoplasmic domain). Interacts (via SPRY domain) with convertase egl-3 (via C-terminus).

Its subcellular location is the synapse. It participates in protein modification; protein ubiquitination. Its function is as follows. Component of a SCF (SKP1-CUL1-F-box protein) E3 ubiquitin ligase complex which is required for the restriction and/or maturation of synapses in GABAergic neuromuscular junction (NMJ) presynaptic neurons. Promotes NRJ synapse development and synaptic transmission by negatively regulating the daf-2/InsR pathway in muscles. By targeting convertase egl-3 for degradation, negatively modulates insulin-like protein ins-4 and ins-6 processing. May stabilize synapse formation by promoting the down-regulation of scd-2. Regulates axon termination in PLM and ALM neurons. This is F-box/SPRY domain-containing protein 1 (fsn-1) from Caenorhabditis briggsae.